Consider the following 409-residue polypeptide: uncharacterized protein (409 aa).

Disordered regions lie at residues 12-32 (ENTE…LHCP), 133-160 (EVST…SREQ), and 194-213 (TVSS…GLST). Polar residues predominate over residues 134–160 (VSTQKSWSSEKNWSGLSQGPGTASREQ).

This is an uncharacterized protein from Mus musculus (Mouse).